A 375-amino-acid chain; its full sequence is Probable RNA 3'-terminal phosphate cyclase-like protein (375 aa).

The protein belongs to the RNA 3'-terminal cyclase family. Type 2 subfamily.

Its subcellular location is the nucleus. It localises to the nucleolus. In terms of biological role, does not have cyclase activity. Plays a role in 40S-ribosomal-subunit biogenesis in the early pre-rRNA processing steps at sites A0, A1 and A2 that are required for proper maturation of the 18S RNA. The chain is Probable RNA 3'-terminal phosphate cyclase-like protein from Arabidopsis thaliana (Mouse-ear cress).